Reading from the N-terminus, the 289-residue chain is Phosphatidylserine decarboxylase proenzyme (289 aa).

Active-site charge relay system; for autoendoproteolytic cleavage activity residues include Asp92, His149, and Ser254. Ser254 functions as the Schiff-base intermediate with substrate; via pyruvic acid; for decarboxylase activity in the catalytic mechanism. Pyruvic acid (Ser); by autocatalysis is present on Ser254.

The protein belongs to the phosphatidylserine decarboxylase family. PSD-B subfamily. Prokaryotic type I sub-subfamily. Heterodimer of a large membrane-associated beta subunit and a small pyruvoyl-containing alpha subunit. Requires pyruvate as cofactor. In terms of processing, is synthesized initially as an inactive proenzyme. Formation of the active enzyme involves a self-maturation process in which the active site pyruvoyl group is generated from an internal serine residue via an autocatalytic post-translational modification. Two non-identical subunits are generated from the proenzyme in this reaction, and the pyruvate is formed at the N-terminus of the alpha chain, which is derived from the carboxyl end of the proenzyme. The autoendoproteolytic cleavage occurs by a canonical serine protease mechanism, in which the side chain hydroxyl group of the serine supplies its oxygen atom to form the C-terminus of the beta chain, while the remainder of the serine residue undergoes an oxidative deamination to produce ammonia and the pyruvoyl prosthetic group on the alpha chain. During this reaction, the Ser that is part of the protease active site of the proenzyme becomes the pyruvoyl prosthetic group, which constitutes an essential element of the active site of the mature decarboxylase.

Its subcellular location is the cell membrane. The catalysed reaction is a 1,2-diacyl-sn-glycero-3-phospho-L-serine + H(+) = a 1,2-diacyl-sn-glycero-3-phosphoethanolamine + CO2. It participates in phospholipid metabolism; phosphatidylethanolamine biosynthesis; phosphatidylethanolamine from CDP-diacylglycerol: step 2/2. Functionally, catalyzes the formation of phosphatidylethanolamine (PtdEtn) from phosphatidylserine (PtdSer). The chain is Phosphatidylserine decarboxylase proenzyme from Pseudomonas aeruginosa (strain ATCC 15692 / DSM 22644 / CIP 104116 / JCM 14847 / LMG 12228 / 1C / PRS 101 / PAO1).